The sequence spans 313 residues: 4-hydroxy-3-methylbut-2-enyl diphosphate reductase (313 aa).

Residue Cys-12 coordinates [4Fe-4S] cluster. Residues His-41 and His-74 each contribute to the (2E)-4-hydroxy-3-methylbut-2-enyl diphosphate site. Dimethylallyl diphosphate contacts are provided by His-41 and His-74. Isopentenyl diphosphate-binding residues include His-41 and His-74. Cys-96 contacts [4Fe-4S] cluster. Position 124 (His-124) interacts with (2E)-4-hydroxy-3-methylbut-2-enyl diphosphate. Residue His-124 coordinates dimethylallyl diphosphate. An isopentenyl diphosphate-binding site is contributed by His-124. Residue Glu-126 is the Proton donor of the active site. Thr-167 is a binding site for (2E)-4-hydroxy-3-methylbut-2-enyl diphosphate. Cys-197 contacts [4Fe-4S] cluster. (2E)-4-hydroxy-3-methylbut-2-enyl diphosphate is bound by residues Ser-225, Ser-226, Asn-227, and Ser-269. Dimethylallyl diphosphate-binding residues include Ser-225, Ser-226, Asn-227, and Ser-269. Ser-225, Ser-226, Asn-227, and Ser-269 together coordinate isopentenyl diphosphate.

This sequence belongs to the IspH family. The cofactor is [4Fe-4S] cluster.

It catalyses the reaction isopentenyl diphosphate + 2 oxidized [2Fe-2S]-[ferredoxin] + H2O = (2E)-4-hydroxy-3-methylbut-2-enyl diphosphate + 2 reduced [2Fe-2S]-[ferredoxin] + 2 H(+). It carries out the reaction dimethylallyl diphosphate + 2 oxidized [2Fe-2S]-[ferredoxin] + H2O = (2E)-4-hydroxy-3-methylbut-2-enyl diphosphate + 2 reduced [2Fe-2S]-[ferredoxin] + 2 H(+). Its pathway is isoprenoid biosynthesis; dimethylallyl diphosphate biosynthesis; dimethylallyl diphosphate from (2E)-4-hydroxy-3-methylbutenyl diphosphate: step 1/1. It functions in the pathway isoprenoid biosynthesis; isopentenyl diphosphate biosynthesis via DXP pathway; isopentenyl diphosphate from 1-deoxy-D-xylulose 5-phosphate: step 6/6. Functionally, catalyzes the conversion of 1-hydroxy-2-methyl-2-(E)-butenyl 4-diphosphate (HMBPP) into a mixture of isopentenyl diphosphate (IPP) and dimethylallyl diphosphate (DMAPP). Acts in the terminal step of the DOXP/MEP pathway for isoprenoid precursor biosynthesis. This Photobacterium profundum (strain SS9) protein is 4-hydroxy-3-methylbut-2-enyl diphosphate reductase.